The chain runs to 188 residues: V-type proton ATPase subunit E (188 aa).

It belongs to the V-ATPase E subunit family.

Functionally, produces ATP from ADP in the presence of a proton gradient across the membrane. The sequence is that of V-type proton ATPase subunit E from Dictyoglomus thermophilum (strain ATCC 35947 / DSM 3960 / H-6-12).